An 88-amino-acid chain; its full sequence is Small ribosomal subunit protein bS18 (88 aa).

It belongs to the bacterial ribosomal protein bS18 family. In terms of assembly, part of the 30S ribosomal subunit. Forms a tight heterodimer with protein bS6.

In terms of biological role, binds as a heterodimer with protein bS6 to the central domain of the 16S rRNA, where it helps stabilize the platform of the 30S subunit. In Aliarcobacter butzleri (strain RM4018) (Arcobacter butzleri), this protein is Small ribosomal subunit protein bS18.